A 395-amino-acid chain; its full sequence is Formate-dependent phosphoribosylglycinamide formyltransferase (395 aa).

N(1)-(5-phospho-beta-D-ribosyl)glycinamide-binding positions include 22-23 and glutamate 82; that span reads EL. ATP-binding positions include arginine 115, lysine 156, 161 to 166, 196 to 199, and glutamate 204; these read SSGKGQ and EGFI. One can recognise an ATP-grasp domain in the interval 120–309; the sequence is RLAAETLGLP…EFALHARAIL (190 aa). Mg(2+)-binding residues include glutamate 268 and glutamate 280. N(1)-(5-phospho-beta-D-ribosyl)glycinamide contacts are provided by residues aspartate 287, lysine 356, and 363-364; that span reads RR.

Belongs to the PurK/PurT family. As to quaternary structure, homodimer.

It catalyses the reaction N(1)-(5-phospho-beta-D-ribosyl)glycinamide + formate + ATP = N(2)-formyl-N(1)-(5-phospho-beta-D-ribosyl)glycinamide + ADP + phosphate + H(+). It functions in the pathway purine metabolism; IMP biosynthesis via de novo pathway; N(2)-formyl-N(1)-(5-phospho-D-ribosyl)glycinamide from N(1)-(5-phospho-D-ribosyl)glycinamide (formate route): step 1/1. Functionally, involved in the de novo purine biosynthesis. Catalyzes the transfer of formate to 5-phospho-ribosyl-glycinamide (GAR), producing 5-phospho-ribosyl-N-formylglycinamide (FGAR). Formate is provided by PurU via hydrolysis of 10-formyl-tetrahydrofolate. In Stenotrophomonas maltophilia (strain K279a), this protein is Formate-dependent phosphoribosylglycinamide formyltransferase.